The sequence spans 498 residues: ATP synthase subunit beta, chloroplastic (498 aa).

An ATP-binding site is contributed by 172–179 (GGAGVGKT).

Belongs to the ATPase alpha/beta chains family. F-type ATPases have 2 components, CF(1) - the catalytic core - and CF(0) - the membrane proton channel. CF(1) has five subunits: alpha(3), beta(3), gamma(1), delta(1), epsilon(1). CF(0) has four main subunits: a(1), b(1), b'(1) and c(9-12).

It localises to the plastid. It is found in the chloroplast thylakoid membrane. It carries out the reaction ATP + H2O + 4 H(+)(in) = ADP + phosphate + 5 H(+)(out). In terms of biological role, produces ATP from ADP in the presence of a proton gradient across the membrane. The catalytic sites are hosted primarily by the beta subunits. The sequence is that of ATP synthase subunit beta, chloroplastic from Liriodendron tulipifera (Tuliptree).